We begin with the raw amino-acid sequence, 476 residues long: Beta-xylosidase (476 aa).

The Proton donor role is filled by Glu188. Catalysis depends on Glu292, which acts as the Nucleophile. Asn468 carries N-linked (GlcNAc...) asparagine glycosylation.

It belongs to the glycosyl hydrolase 5 (cellulase A) family.

It localises to the secreted. It carries out the reaction Hydrolysis of (1-&gt;4)-beta-D-xylans, to remove successive D-xylose residues from the non-reducing termini.. In terms of biological role, catalyzes the hydrolysis of xylo-oligomers to xylose units and plays an important role in xylan degradation. Can also perform the transglycosylation of xylose and alcohol. Has no endoglucanase activity. The polypeptide is Beta-xylosidase (Phanerodontia chrysosporium (White-rot fungus)).